The following is a 177-amino-acid chain: UPF0340 protein STH78 (177 aa).

This sequence belongs to the UPF0340 family.

This Symbiobacterium thermophilum (strain DSM 24528 / JCM 14929 / IAM 14863 / T) protein is UPF0340 protein STH78.